The following is a 96-amino-acid chain: Co-chaperonin GroES (96 aa).

Belongs to the GroES chaperonin family. Heptamer of 7 subunits arranged in a ring. Interacts with the chaperonin GroEL.

The protein resides in the cytoplasm. In terms of biological role, together with the chaperonin GroEL, plays an essential role in assisting protein folding. The GroEL-GroES system forms a nano-cage that allows encapsulation of the non-native substrate proteins and provides a physical environment optimized to promote and accelerate protein folding. GroES binds to the apical surface of the GroEL ring, thereby capping the opening of the GroEL channel. In Shewanella halifaxensis (strain HAW-EB4), this protein is Co-chaperonin GroES.